Here is a 711-residue protein sequence, read N- to C-terminus: Polyribonucleotide nucleotidyltransferase (711 aa).

Positions 494 and 500 each coordinate Mg(2+). The region spanning 560–620 (PKIEIFGVDP…INVENAKSDI (61 aa)) is the KH domain. Positions 651 to 710 (GEEFDGVVKKIMDFGAFISLKDGIDGLLHVSKIKTQLSEGDTLRVKVEEIKRGKISLELC) constitute an S1 motif domain.

The protein belongs to the polyribonucleotide nucleotidyltransferase family. Mg(2+) is required as a cofactor.

It localises to the cytoplasm. The enzyme catalyses RNA(n+1) + phosphate = RNA(n) + a ribonucleoside 5'-diphosphate. Its function is as follows. Involved in mRNA degradation. Catalyzes the phosphorolysis of single-stranded polyribonucleotides processively in the 3'- to 5'-direction. The protein is Polyribonucleotide nucleotidyltransferase of Campylobacter hominis (strain ATCC BAA-381 / DSM 21671 / CCUG 45161 / LMG 19568 / NCTC 13146 / CH001A).